Consider the following 209-residue polypeptide: Large ribosomal subunit protein uL3 (209 aa).

The tract at residues 128–163 (AHRGPMTHGSKFHRAVGSMGASSDPSRTFKNKRMPG) is disordered.

Belongs to the universal ribosomal protein uL3 family. Part of the 50S ribosomal subunit. Forms a cluster with proteins L14 and L19.

Its function is as follows. One of the primary rRNA binding proteins, it binds directly near the 3'-end of the 23S rRNA, where it nucleates assembly of the 50S subunit. This Clostridium botulinum (strain 657 / Type Ba4) protein is Large ribosomal subunit protein uL3.